The chain runs to 79 residues: UPF0180 protein BcerKBAB4_1316 (79 aa).

The protein belongs to the UPF0180 family.

This Bacillus mycoides (strain KBAB4) (Bacillus weihenstephanensis) protein is UPF0180 protein BcerKBAB4_1316.